An 843-amino-acid polypeptide reads, in one-letter code: F-box only protein 11 (843 aa).

Residues 1–63 (MVAEESGPGA…RVSGKSQDLS (63 aa)) form a disordered region. Positions 30-45 (PTKNSMEGASTSTTEN) are enriched in polar residues. The 47-residue stretch at 69-115 (QYLQEKLPDEVVLKIFSYLLEQDLCRAACVCKRFSELANDPILWKRL) folds into the F-box domain. PbH1 repeat units lie at residues 311-333 (GACP…YITD), 334-356 (HAQG…WVKN), 357-379 (HGNP…FTFD), 380-402 (HGMG…EVKA), 403-425 (YANP…YVHE), 426-448 (KGRG…WITS), 449-471 (NSDP…YIFG), 472-494 (DGRG…QIRT), 495-517 (NSCP…YVHE), 518-540 (KGQG…WVTT), 541-563 (GSTP…YFYD), 564-586 (NGHG…QIRT), 587-609 (GSNP…LVYN), 610-632 (SGLG…WIKT), 633-655 (DSNP…CIFN), 656-678 (GGRG…LIST), 679-701 (NSHP…EITN), 702-724 (HATA…FLAS), and 725-746 (GVNV…EKAV). The segment at 749-820 (GQCLYKISSY…LSNPCTLAGE (72 aa)) adopts a UBR-type zinc-finger fold.

In terms of assembly, component of the SCF(FBXO11) complex consisting of CUL1, RBX1, SKP1 and FBXO11. Interacts with CIITA.

The protein localises to the nucleus. Its subcellular location is the chromosome. Its pathway is protein modification; protein ubiquitination. Functionally, substrate recognition component of a SCF (SKP1-CUL1-F-box protein) E3 ubiquitin-protein ligase complex which mediates the ubiquitination and subsequent proteasomal degradation of target proteins, such as DTL/CDT2, BCL6, SNAI1 and PRDM1/BLIMP1. The SCF(FBXO11) complex mediates ubiquitination and degradation of BCL6, thereby playing a role in the germinal center B-cells terminal differentiation toward memory B-cells and plasma cells. The SCF(FBXO11) complex also mediates ubiquitination and degradation of DTL, an important step for the regulation of TGF-beta signaling, cell migration and the timing of the cell-cycle progression and exit. The SCF(FBXO11) complex also catalyzes ubiquitination and degradation of GSK3B-phosphorylated SNAI1. Binds to and neddylates phosphorylated p53/TP53, inhibiting its transcriptional activity. Plays a role in the regulatiom of erythropoiesis but not myelopoiesis or megakaryopoiesis. Mechanistically, activates erythroid genes by mediating the degradation of BAHD1, a heterochromatin-associated protein that recruits corepressors to H3K27me3 marks. Participates in macrophage cell death and inflammation in response to bacterial toxins by regulating the expression of complement 5a receptor 1/C5AR1 and IL-1beta. Acts as a critical regulator to determine the level of MHC-II by mediating the recognition of degron at the P/S/T domain of CIITA leading to its ubiquitination and subsequent degradation via the proteasome. Participates in the antiviral repsonse by initiating the activation of TBK1-IRF3-IFN-I axis. Mediates the 'Lys-63'-linked ubiquitination of TRAF3 to strengthen the interaction between TRAF3 and TBK1. The sequence is that of F-box only protein 11 (Fbxo11) from Rattus norvegicus (Rat).